The following is a 292-amino-acid chain: tRNA (guanine-N(1)-)-methyltransferase (292 aa).

S-adenosyl-L-methionine is bound by residues glycine 151 and isoleucine 175–leucine 180.

It belongs to the RNA methyltransferase TrmD family. Homodimer.

The protein resides in the cytoplasm. The catalysed reaction is guanosine(37) in tRNA + S-adenosyl-L-methionine = N(1)-methylguanosine(37) in tRNA + S-adenosyl-L-homocysteine + H(+). Specifically methylates guanosine-37 in various tRNAs. The sequence is that of tRNA (guanine-N(1)-)-methyltransferase from Corynebacterium diphtheriae (strain ATCC 700971 / NCTC 13129 / Biotype gravis).